Consider the following 164-residue polypeptide: Gene 59 protein (164 aa).

This is Gene 59 protein (59) from Mycobacterium (Mycobacteriophage L5).